Here is a 689-residue protein sequence, read N- to C-terminus: MQVSNVNDVKIYNLSCGKSLPEWLSDRKKRALQKKDVDVRRRIELIQDFEMPTVSTNIKVSRDGQYIMAAGTYKPRIRCYDTYQLSLKFERCLDSEVIKFDILSEDYSKIVFLQSDRYVELHSQHGRYYRLRIPKFGRDFAYHYPSCDLYFVGASSEVYRLNLEQGRYLNSLQTEASQINVCDINPTHHLFAAGTTEGRVECWDPRTRSRVGLLDCALSSVTADMEVEGLPSVSALKFNGPLHMAVGTSTGQVLLYDLRSNRPVIVKDHQYGLPIKSIQFHSALDLVISADSRIIKMWNKDNGKIFTSIEPEADVNDVCLYPNSGMLFTANEAPKMNVYYIPALGPAPRWCSFLDNLTEELEENPENTVYDDYKFVTRKELDELGLSHLIGSPMLRAYMHGFFMDIRLYHKVKAMVNPFAYEEYKKEKIRQKIEETRAQRVQIKKLPKVNKELALKLYEDEEEEKQLSKKKKKQKKMPNILTDDRFKVMFENPDFQVDQESEEYRLLNPLVSKISEKRKKKLKILEKLEAEGEEEEEEPEGKPSDAESSETSDDEKGWVEEVRKQRKLLRQEEKERRQERVREDQQTALKPQFYEIKAGEEFRSFQDAAKKQKLMRKTLEDRIKVEEKLGTLNVADTAVGSKQLTFTLKKSEQHRKRQEAEKQHQEERKKLRRSAGHLKSKQAKGRPFY.

WD repeat units follow at residues 50-90, 174-213, 228-266, 270-308, and 310-349; these read EMPT…LKFE, TEASQINVCDINPTHHLFAAGTTEGRVECWDPRTRSRVGL, EGLPSVSALKFNGPLHMAVGTSTGQVLLYDLRSNRPVIV, QYGLPIKSIQFHSALDLVISADSRIIKMWNKDNGKIFTS, and EPEADVNDVCLYPNSGMLFTANEAPKMNVYYIPALGPAPR. 3 coiled-coil regions span residues 422-476, 511-590, and 647-679; these read EEYK…KQKK, VSKI…TALK, and TLKKSEQHRKRQEAEKQHQEERKKLRRSAGHLK. Disordered regions lie at residues 529-592 and 646-689; these read EAEG…LKPQ and FTLK…RPFY. 2 stretches are compositionally biased toward basic and acidic residues: residues 554–585 and 658–669; these read DEKGWVEEVRKQRKLLRQEEKERRQERVREDQ and QEAEKQHQEERK. A compositionally biased stretch (basic residues) spans 670–689; it reads KLRRSAGHLKSKQAKGRPFY.

It belongs to the WD repeat NOL10/ENP2 family.

The protein resides in the nucleus. It localises to the nucleolus. The chain is Nucleolar protein 10 (nol10) from Xenopus laevis (African clawed frog).